The primary structure comprises 232 residues: Small ribosomal subunit protein uS3 (232 aa).

The region spanning 39 to 107 (VRRFLEQRLK…PVHVNIEEVR (69 aa)) is the KH type-2 domain.

This sequence belongs to the universal ribosomal protein uS3 family. Part of the 30S ribosomal subunit. Forms a tight complex with proteins S10 and S14.

Binds the lower part of the 30S subunit head. Binds mRNA in the 70S ribosome, positioning it for translation. The sequence is that of Small ribosomal subunit protein uS3 from Chromohalobacter salexigens (strain ATCC BAA-138 / DSM 3043 / CIP 106854 / NCIMB 13768 / 1H11).